We begin with the raw amino-acid sequence, 106 residues long: uncharacterized protein (106 aa).

The segment at 1–23 (MASGAPPLTQKTPSHARRKERRR) is disordered. Residues 14–23 (SHARRKERRR) are compositionally biased toward basic residues.

This is an uncharacterized protein from Treponema pallidum (strain Nichols).